Reading from the N-terminus, the 171-residue chain is CASP-like protein 1C3 (171 aa).

Topologically, residues 1 to 6 (MVKPKR) are cytoplasmic. Residues 7–27 (LLSLLLRLIAFGATLAAVIIM) traverse the membrane as a helical segment. Residues 28–52 (ATSHEKGSFFALSYEAKYSDTPAFK) are Extracellular-facing. The chain crosses the membrane as a helical span at residues 53–73 (YFVIANAIVTVYGFLALFIPS). The Cytoplasmic portion of the chain corresponds to 74 to 79 (ESPLWR). A helical transmembrane segment spans residues 80 to 100 (LVLALDLVFTMLLISSISAAL). Topologically, residues 101–130 (AVAQVGKKGNSSAGWLPVCGQVTKYCNQVT) are extracellular. Asparagine 110 carries N-linked (GlcNAc...) asparagine glycosylation. The chain crosses the membrane as a helical span at residues 131–151 (GALVAGFIAIITYIILLLYSI). Over 152-171 (YTFLNSLLGKTPCRLSSPGI) the chain is Cytoplasmic.

Belongs to the Casparian strip membrane proteins (CASP) family. As to quaternary structure, homodimer and heterodimers.

The protein localises to the cell membrane. The chain is CASP-like protein 1C3 from Populus trichocarpa (Western balsam poplar).